The following is a 787-amino-acid chain: Protein translocase subunit SecA (787 aa).

ATP is bound by residues Gln85, 103 to 107, and Asp492; that span reads GEGKT.

It belongs to the SecA family. As to quaternary structure, monomer and homodimer. Part of the essential Sec protein translocation apparatus which comprises SecA, SecYEG and auxiliary proteins SecDF. Other proteins may also be involved.

Its subcellular location is the cell membrane. The protein resides in the cytoplasm. It catalyses the reaction ATP + H2O + cellular proteinSide 1 = ADP + phosphate + cellular proteinSide 2.. In terms of biological role, part of the Sec protein translocase complex. Interacts with the SecYEG preprotein conducting channel. Has a central role in coupling the hydrolysis of ATP to the transfer of proteins into and across the cell membrane, serving as an ATP-driven molecular motor driving the stepwise translocation of polypeptide chains across the membrane. In Lactiplantibacillus plantarum (strain ATCC BAA-793 / NCIMB 8826 / WCFS1) (Lactobacillus plantarum), this protein is Protein translocase subunit SecA.